The following is a 608-amino-acid chain: Zinc finger protein 652 (608 aa).

Ser57 carries the post-translational modification Phosphoserine. The disordered stretch occupies residues 61 to 232 (VLADTKMSKP…KRATKEAKAP (172 aa)). Positions 71–97 (HLHETEEQPYFREPRAVSDVHTVKEDR) are enriched in basic and acidic residues. 2 stretches are compositionally biased toward acidic residues: residues 98–108 (ENSDDTEEEEE) and 151–162 (EEDEEETEEEAT). Phosphoserine is present on Ser100. Residue Thr103 is modified to Phosphothreonine. A compositionally biased stretch (low complexity) spans 194–208 (AASAAAATTSPAPRT). Ser196 and Ser203 each carry phosphoserine. Residues 244–267 (LTCEKCPRVFNTRWYLEKHMNVTH) form a C2H2-type 1 zinc finger. The C2H2-type 2; degenerate zinc-finger motif lies at 271 to 293 (QICDKCGKKFVLESELSLHQQTD). C2H2-type zinc fingers lie at residues 298–321 (IQCVSCNKSFKKLWSLHEHIKIVH), 328–350 (FACEICEKKFYTMAHVRKHMVAH), 356–378 (FTCETCGKSFKRSMSLKVHSLQH), 384–406 (FRCENCDERFQYKYQLRSHMSIH), 412–434 (FMCQWCGKDFNMKQYFDEHMKTH), and 440–462 (FICEICGKSFTSRPNMKRHRRTH). A C2H2-type 9; degenerate zinc finger spans residues 468-491 (YPCDVCGQRFRFSNMLKAHKEKCF). The segment at 497–608 (VNVPPAVQIP…KNSAAPAQHH (112 aa)) is mediates interaction with CBFA2T3.

The protein belongs to the krueppel C2H2-type zinc-finger protein family. Interacts with CBFA2T3.

Its subcellular location is the nucleus. Functions as a transcriptional repressor. The chain is Zinc finger protein 652 (Znf652) from Mus musculus (Mouse).